Consider the following 272-residue polypeptide: Glycosylphosphatidylinositol anchor biosynthesis protein 11 (272 aa).

Residues 21 to 31 (QSTSTTKSTPG) are compositionally biased toward polar residues. The disordered stretch occupies residues 21-48 (QSTSTTKSTPGSQATESSTTTAGSSSSL). The span at 32–48 (SQATESSTTTAGSSSSL) shows a compositional bias: low complexity. A run of 5 helical transmembrane segments spans residues 91–111 (VMLN…LLCL), 145–165 (LLAS…MVLF), 177–197 (FLCA…VHGV), 215–235 (TFGG…PIPL), and 248–268 (ILCG…TLFW).

It belongs to the PIGF family.

Its subcellular location is the endoplasmic reticulum membrane. It participates in glycolipid biosynthesis; glycosylphosphatidylinositol-anchor biosynthesis. Functionally, acts in the GPI biosynthetic pathway between GlcNAc-PI synthesis and GPI transfer to protein. This chain is Glycosylphosphatidylinositol anchor biosynthesis protein 11 (gpi-11), found in Neurospora crassa (strain ATCC 24698 / 74-OR23-1A / CBS 708.71 / DSM 1257 / FGSC 987).